Here is a 509-residue protein sequence, read N- to C-terminus: Maturase K (509 aa).

The protein belongs to the intron maturase 2 family. MatK subfamily.

The protein localises to the plastid. It localises to the chloroplast. In terms of biological role, usually encoded in the trnK tRNA gene intron. Probably assists in splicing its own and other chloroplast group II introns. This Stylosanthes hamata (Caribbean stylo) protein is Maturase K.